We begin with the raw amino-acid sequence, 274 residues long: MRKIAIYGKGGIGKSTTTQNTVAGLAEMGKKVMVVGCDPKADSTRLLLHGLAQKTVLDTLREEGEDVELDDILKEGYGGTMCTESGGPEPGVGCAGRGIITSINLLEQLGAYEEDKKLDYVFYDVLGDVVCGGFAMPIRDGKAEEIYIVCSGEMMAMYAANNICKGIVKYADTGGVRLGGIICNSRKVDFEKEMIEELCRQIGTQMIHFMPRENQVQRAEINRKTVIDYSPEHAQADEYRALAKKIDENKMLVIPKPLEIAQLEKLLVDFGIAN.

8–15 is a binding site for ATP; it reads GKGGIGKS. Residue Cys94 participates in [4Fe-4S] cluster binding. Arg97 carries the ADP-ribosylarginine; by dinitrogenase reductase ADP-ribosyltransferase modification. Residue Cys131 participates in [4Fe-4S] cluster binding.

This sequence belongs to the NifH/BchL/ChlL family. Homodimer. It depends on [4Fe-4S] cluster as a cofactor. The reversible ADP-ribosylation of Arg-97 inactivates the nitrogenase reductase and regulates nitrogenase activity.

It catalyses the reaction N2 + 8 reduced [2Fe-2S]-[ferredoxin] + 16 ATP + 16 H2O = H2 + 8 oxidized [2Fe-2S]-[ferredoxin] + 2 NH4(+) + 16 ADP + 16 phosphate + 6 H(+). Its function is as follows. The key enzymatic reactions in nitrogen fixation are catalyzed by the nitrogenase complex, which has 2 components: the iron protein and the molybdenum-iron protein. This is Nitrogenase iron protein from Solidesulfovibrio magneticus (strain ATCC 700980 / DSM 13731 / RS-1) (Desulfovibrio magneticus).